Here is a 440-residue protein sequence, read N- to C-terminus: MNKFRTFPQINTLIEDESLKSYPFYIKAFFCKKVVAKLKENFSQDEISKDKLLLEIKKEIKTFYRKDLQSVINASGVVIHTNLGRSVIHEELYEACKDIICNYSNVEFDLENGKRGSRYALVLEKLKMLFECEDALVVNNNAAAVFLVLNSLCYNKEIISSRGELVEIGGSFRVPEVIKAAGVKLCEVGTSNKTHLKDYEQAISENTALILKTHKSNFALMGFHSEVNIKDLHELAKEKGLLSYYDLGSGWCENLNEKLIKNEPKIKKLVQECDILSFSGDKLFGSVQAGIILGKKELIEKLKQNQLLRMLRVDKLTLSFLNESLKAYLQKDYEKIITLKLLNDDLSFIEKKALRVQKELKFQTQLKKSKSLVGGGSMPDKSLDTYILTFQGDALKLQTRFRKENIIGRIENDEFVLDFRTIRENELQKLILIINQMENL.

The residue at position 282 (lysine 282) is an N6-(pyridoxal phosphate)lysine.

Belongs to the SelA family. Pyridoxal 5'-phosphate serves as cofactor.

Its subcellular location is the cytoplasm. It carries out the reaction L-seryl-tRNA(Sec) + selenophosphate + H(+) = L-selenocysteinyl-tRNA(Sec) + phosphate. It participates in aminoacyl-tRNA biosynthesis; selenocysteinyl-tRNA(Sec) biosynthesis; selenocysteinyl-tRNA(Sec) from L-seryl-tRNA(Sec) (bacterial route): step 1/1. Converts seryl-tRNA(Sec) to selenocysteinyl-tRNA(Sec) required for selenoprotein biosynthesis. This Campylobacter jejuni subsp. jejuni serotype O:6 (strain 81116 / NCTC 11828) protein is L-seryl-tRNA(Sec) selenium transferase.